Reading from the N-terminus, the 216-residue chain is CASP-like protein 2U1 (216 aa).

The segment at 1–30 (MKQDTEMGEATNGYIGTPGTVPVSHAGNDS) is disordered. The Cytoplasmic segment spans residues 1-37 (MKQDTEMGEATNGYIGTPGTVPVSHAGNDSGMRRMRT). The helical transmembrane segment at 38 to 58 (ASILMRLTAMALCVTALVTMV) threads the bilayer. The Extracellular portion of the chain corresponds to 59–86 (TDKQTHYFNFASTTIVKTAEYTNVLALK). Residues 87 to 107 (VFVYTNGVIAGYSLLQALWTI) form a helical membrane-spanning segment. Residues 108–128 (VAKSSYSTSKARLWTTFFLDQ) lie on the Cytoplasmic side of the membrane. The chain crosses the membrane as a helical span at residues 129-148 (FIVYVLIGVTGAATEVAYIA). The Extracellular segment spans residues 149 to 170 (EKGESDVAWPKQCNNFGRFCSQ). The helical transmembrane segment at 171–191 (VGASVIVCFVAILTLVFLAVL) threads the bilayer. Topologically, residues 192-216 (SAKQLFIHERPSRTTRKDGYYTSNQ) are cytoplasmic.

This sequence belongs to the Casparian strip membrane proteins (CASP) family. As to quaternary structure, homodimer and heterodimers.

Its subcellular location is the cell membrane. The polypeptide is CASP-like protein 2U1 (Marchantia polymorpha (Common liverwort)).